We begin with the raw amino-acid sequence, 162 residues long: Globin CTT-VIIB-7 (162 aa).

A signal peptide spans 1 to 16; the sequence is MKFFAVLALCVVGAIA. The 145-residue stretch at 18–162 folds into the Globin domain; sequence PLSADEANLV…TYAVALKSLE (145 aa). H76 and H111 together coordinate heme b.

Belongs to the globin family. Homodimer.

This chain is Globin CTT-VIIB-7 (CTT-7B7), found in Chironomus thummi piger (Midge).